The sequence spans 44 residues: uncharacterized protein (44 aa).

This is an uncharacterized protein from Bacillus subtilis (Bacteriophage phi-105).